Here is a 321-residue protein sequence, read N- to C-terminus: Methionine import ATP-binding protein MetN (321 aa).

The ABC transporter domain occupies 2–241 (INAVDLHKVY…PGSLLARSLF (240 aa)). 38–45 (GPSGAGKS) lines the ATP pocket.

The protein belongs to the ABC transporter superfamily. Methionine importer (TC 3.A.1.24) family. As to quaternary structure, the complex is composed of two ATP-binding proteins (MetN), two transmembrane proteins (MetI) and a solute-binding protein (MetQ).

It localises to the cell membrane. It carries out the reaction L-methionine(out) + ATP + H2O = L-methionine(in) + ADP + phosphate + H(+). The catalysed reaction is D-methionine(out) + ATP + H2O = D-methionine(in) + ADP + phosphate + H(+). Part of the ABC transporter complex MetNIQ involved in methionine import. Responsible for energy coupling to the transport system. The protein is Methionine import ATP-binding protein MetN of Thermobifida fusca (strain YX).